Consider the following 320-residue polypeptide: Acetyl-coenzyme A carboxylase carboxyl transferase subunit alpha (320 aa).

In terms of domain architecture, CoA carboxyltransferase C-terminal spans 33–294 (AFDTEIQALR…GDAVEDELKA (262 aa)).

Belongs to the AccA family. As to quaternary structure, acetyl-CoA carboxylase is a heterohexamer composed of biotin carboxyl carrier protein (AccB), biotin carboxylase (AccC) and two subunits each of ACCase subunit alpha (AccA) and ACCase subunit beta (AccD).

It is found in the cytoplasm. The catalysed reaction is N(6)-carboxybiotinyl-L-lysyl-[protein] + acetyl-CoA = N(6)-biotinyl-L-lysyl-[protein] + malonyl-CoA. Its pathway is lipid metabolism; malonyl-CoA biosynthesis; malonyl-CoA from acetyl-CoA: step 1/1. Functionally, component of the acetyl coenzyme A carboxylase (ACC) complex. First, biotin carboxylase catalyzes the carboxylation of biotin on its carrier protein (BCCP) and then the CO(2) group is transferred by the carboxyltransferase to acetyl-CoA to form malonyl-CoA. This chain is Acetyl-coenzyme A carboxylase carboxyl transferase subunit alpha, found in Caulobacter vibrioides (strain ATCC 19089 / CIP 103742 / CB 15) (Caulobacter crescentus).